Consider the following 247-residue polypeptide: ATP synthase subunit a, chloroplastic (247 aa).

5 helical membrane passes run 38 to 58 (QVLI…IIAV), 95 to 115 (VPFI…GALL), 134 to 154 (INTT…AGLS), 199 to 219 (LVVV…VMFL), and 220 to 240 (GLFT…AYIG).

The protein belongs to the ATPase A chain family. As to quaternary structure, F-type ATPases have 2 components, CF(1) - the catalytic core - and CF(0) - the membrane proton channel. CF(1) has five subunits: alpha(3), beta(3), gamma(1), delta(1), epsilon(1). CF(0) has four main subunits: a, b, b' and c.

It localises to the plastid. The protein localises to the chloroplast thylakoid membrane. Key component of the proton channel; it plays a direct role in the translocation of protons across the membrane. The polypeptide is ATP synthase subunit a, chloroplastic (Oryza nivara (Indian wild rice)).